Here is a 127-residue protein sequence, read N- to C-terminus: Small ribosomal subunit protein uS13 (127 aa).

A disordered region spans residues proline 97–lysine 127. Over residues glutamine 101 to lysine 127 the composition is skewed to basic residues.

It belongs to the universal ribosomal protein uS13 family. As to quaternary structure, part of the 30S ribosomal subunit. Forms a loose heterodimer with protein S19. Forms two bridges to the 50S subunit in the 70S ribosome.

Its function is as follows. Located at the top of the head of the 30S subunit, it contacts several helices of the 16S rRNA. In the 70S ribosome it contacts the 23S rRNA (bridge B1a) and protein L5 of the 50S subunit (bridge B1b), connecting the 2 subunits; these bridges are implicated in subunit movement. Contacts the tRNAs in the A and P-sites. The polypeptide is Small ribosomal subunit protein uS13 (Gloeobacter violaceus (strain ATCC 29082 / PCC 7421)).